Consider the following 320-residue polypeptide: Beta-ketoacyl-[acyl-carrier-protein] synthase III (320 aa).

Active-site residues include cysteine 112 and histidine 245. The segment at 246 to 250 is ACP-binding; that stretch reads QANIR. Residue asparagine 275 is part of the active site.

This sequence belongs to the thiolase-like superfamily. FabH family. Homodimer.

It localises to the cytoplasm. The catalysed reaction is malonyl-[ACP] + acetyl-CoA + H(+) = 3-oxobutanoyl-[ACP] + CO2 + CoA. It functions in the pathway lipid metabolism; fatty acid biosynthesis. In terms of biological role, catalyzes the condensation reaction of fatty acid synthesis by the addition to an acyl acceptor of two carbons from malonyl-ACP. Catalyzes the first condensation reaction which initiates fatty acid synthesis and may therefore play a role in governing the total rate of fatty acid production. Possesses both acetoacetyl-ACP synthase and acetyl transacylase activities. Its substrate specificity determines the biosynthesis of branched-chain and/or straight-chain of fatty acids. This Streptococcus thermophilus (strain ATCC BAA-250 / LMG 18311) protein is Beta-ketoacyl-[acyl-carrier-protein] synthase III.